The primary structure comprises 514 residues: Butyrophilin subfamily 2 member A2 (514 aa).

Residues 1-29 form the signal peptide; the sequence is MEPTTSLRSCPIASLLFFLVLSLFVLVSA. In terms of domain architecture, Ig-like V-type spans 30–142; sequence QFTVIGPAEP…SYDQATMKLM (113 aa). At 30–244 the chain is on the extracellular side; the sequence is QFTVIGPAEP…ILIPESFVPS (215 aa). Residues asparagine 47 and asparagine 115 are each glycosylated (N-linked (GlcNAc...) asparagine). Intrachain disulfides connect cysteine 52-cysteine 126 and cysteine 166-cysteine 220. The 83-residue stretch at 150–232 folds into the Ig-like C2-type domain; the sequence is PLIKMKTLED…NNTLLSQEVE (83 aa). A helical transmembrane segment spans residues 245–265; that stretch reads LPLWMVAVAVTLPVVMLILLT. At 266-514 the chain is on the cytoplasmic side; it reads SGSICLVKKH…PISQSLVRKP (249 aa). Residues 281-304 adopt a coiled-coil conformation; sequence ILSAEKEAEYEEKEAARQLQEELR. Residues 295–488 enclose the B30.2/SPRY domain; the sequence is AARQLQEELR…LFICPAFTGA (194 aa).

The protein belongs to the immunoglobulin superfamily. BTN/MOG family. In terms of processing, N-glycosylated. Widely expressed (at protein level). In the thymus, restricted to the corticomedullary junction, but not confined solely to epithelial cells (at protein level). Significant expression on naive B-cells, splenic natural killer cells, dendritic cells and peritoneal macrophages (at protein level). Negligible expression on naive T-cells up-regulated on activated T-cells (at protein level).

The protein resides in the membrane. Its function is as follows. Inhibits the proliferation of CD4 and CD8 T-cells activated by anti-CD3 antibodies, T-cell metabolism and IL2 and IFNG secretion. In Mus musculus (Mouse), this protein is Butyrophilin subfamily 2 member A2 (Btn2a2).